A 115-amino-acid polypeptide reads, in one-letter code: UPF0145 protein lp_2083 (115 aa).

The protein belongs to the UPF0145 family.

The chain is UPF0145 protein lp_2083 from Lactiplantibacillus plantarum (strain ATCC BAA-793 / NCIMB 8826 / WCFS1) (Lactobacillus plantarum).